Consider the following 248-residue polypeptide: UDP-2,3-diacylglucosamine hydrolase (248 aa).

Mn(2+) contacts are provided by D8, H10, D41, N79, and H114. A substrate-binding site is contributed by 79–80 (NR). Residues D122, S160, D171, and H202 each coordinate substrate. Mn(2+) is bound by residues H202 and H204.

The protein belongs to the LpxH family. The cofactor is Mn(2+).

Its subcellular location is the cell inner membrane. The catalysed reaction is UDP-2-N,3-O-bis[(3R)-3-hydroxytetradecanoyl]-alpha-D-glucosamine + H2O = 2-N,3-O-bis[(3R)-3-hydroxytetradecanoyl]-alpha-D-glucosaminyl 1-phosphate + UMP + 2 H(+). It functions in the pathway glycolipid biosynthesis; lipid IV(A) biosynthesis; lipid IV(A) from (3R)-3-hydroxytetradecanoyl-[acyl-carrier-protein] and UDP-N-acetyl-alpha-D-glucosamine: step 4/6. In terms of biological role, hydrolyzes the pyrophosphate bond of UDP-2,3-diacylglucosamine to yield 2,3-diacylglucosamine 1-phosphate (lipid X) and UMP by catalyzing the attack of water at the alpha-P atom. Involved in the biosynthesis of lipid A, a phosphorylated glycolipid that anchors the lipopolysaccharide to the outer membrane of the cell. This Stenotrophomonas maltophilia (strain R551-3) protein is UDP-2,3-diacylglucosamine hydrolase.